The sequence spans 1012 residues: RNA-binding protein 26 (1012 aa).

Lys94 is covalently cross-linked (Glycyl lysine isopeptide (Lys-Gly) (interchain with G-Cter in SUMO2)). Positions 98-127 (LQHQEKDIKKEELTKEEEREKKFSRRLNHS) form a coiled coil. Residue Lys106 forms a Glycyl lysine isopeptide (Lys-Gly) (interchain with G-Cter in SUMO1); alternate linkage. A Glycyl lysine isopeptide (Lys-Gly) (interchain with G-Cter in SUMO2); alternate cross-link involves residue Lys106. Residues 106 to 118 (KKEELTKEEEREK) are compositionally biased toward basic and acidic residues. A disordered region spans residues 106–236 (KKEELTKEEE…PLENNYTPVS (131 aa)). Residue Ser127 is modified to Phosphoserine. The segment covering 134-168 (RYRDNRSRDERKKDDRSRKRDYDRNPPRRDSYRDR) has biased composition (basic and acidic residues). Positions 169–186 (YNRRRGRSRSYSRSRSRS) are enriched in basic residues. Composition is skewed to basic and acidic residues over residues 187 to 201 (WSKERLRDRDRDRSR) and 209 to 227 (RSRERDLVKPKYDLDRTDP). The C3H1-type zinc-finger motif lies at 288–316 (PMPKKRCRDYDEKGFCMRGDMCPFDHGSD). Residues 334-388 (QPPVVEGPPPPGLPPPPPILTPPPVNLRPPVPPPGPLPPSLPPVTGPPPPLPPLQ) show a composition bias toward pro residues. Disordered stretches follow at residues 334–404 (QPPV…SSVP) and 465–520 (IGLT…NFNR). Residues 394–404 (APPNSATSSVP) are compositionally biased toward low complexity. The residue at position 501 (Ser501) is a Phosphoserine. N6-acetyllysine is present on Lys515. Ser523 bears the Phosphoserine mark. The RRM 1 domain occupies 537–611 (TKLELRKVPP…RFIKVYWHRE (75 aa)). Residue Ser621 is modified to Phosphoserine. The segment at 647–667 (PVPSATTEPAEAQSATSELPQ) is disordered. Coiled coils occupy residues 724-800 (DNNE…KSTS) and 828-852 (KKMQAGEEVTELRRKYTELQLEAAK). The interval 858–889 (SGRGRGIHTRGRGTAHGRGRGRGRGRGVPGHA) is disordered. Positions 862-882 (RGIHTRGRGTAHGRGRGRGRG) are enriched in basic residues. Residues 896–965 (RALEISAFTE…QDLKLAWNKP (70 aa)) form the RRM 2 domain. A disordered region spans residues 970-1012 (SAVDTEEAEPDEEEFQEESLVDDSLLQDDDEEEEDNESRSWRR). Acidic residues predominate over residues 973-1005 (DTEEAEPDEEEFQEESLVDDSLLQDDDEEEEDN).

Expressed in testis and ovary.

Functionally, may be involved in the turnover of nuclear polyadenylated (pA+) RNA. This Mus musculus (Mouse) protein is RNA-binding protein 26.